Reading from the N-terminus, the 365-residue chain is Succinyl-diaminopimelate desuccinylase (365 aa).

Position 64 (His64) interacts with Zn(2+). Residue Asp66 is part of the active site. Zn(2+) is bound at residue Asp95. The Proton acceptor role is filled by Glu125. Zn(2+) contacts are provided by Glu126, Glu154, and His339.

This sequence belongs to the peptidase M20A family. DapE subfamily. Homodimer. Zn(2+) serves as cofactor. The cofactor is Co(2+).

The catalysed reaction is N-succinyl-(2S,6S)-2,6-diaminopimelate + H2O = (2S,6S)-2,6-diaminopimelate + succinate. It participates in amino-acid biosynthesis; L-lysine biosynthesis via DAP pathway; LL-2,6-diaminopimelate from (S)-tetrahydrodipicolinate (succinylase route): step 3/3. In terms of biological role, catalyzes the hydrolysis of N-succinyl-L,L-diaminopimelic acid (SDAP), forming succinate and LL-2,6-diaminopimelate (DAP), an intermediate involved in the bacterial biosynthesis of lysine and meso-diaminopimelic acid, an essential component of bacterial cell walls. In Campylobacter fetus subsp. fetus (strain 82-40), this protein is Succinyl-diaminopimelate desuccinylase.